Reading from the N-terminus, the 124-residue chain is Ribulose bisphosphate carboxylase small subunit (124 aa).

The protein belongs to the RuBisCO small chain family. Heterohexadecamer of 8 large and 8 small subunits.

Functionally, ruBisCO catalyzes two reactions: the carboxylation of D-ribulose 1,5-bisphosphate, the primary event in carbon dioxide fixation, as well as the oxidative fragmentation of the pentose substrate. Both reactions occur simultaneously and in competition at the same active site. Although the small subunit is not catalytic it is essential for maximal activity. This chain is Ribulose bisphosphate carboxylase small subunit, found in Hydrogenophilus thermoluteolus (Pseudomonas hydrogenothermophila).